The following is a 131-amino-acid chain: Protein GLUTAMINE DUMPER 5 (131 aa).

The Extracellular portion of the chain corresponds to 1–34; that stretch reads MRQFPSIRGNINEKMMTTMVESQTRSPWRTPVPY. A helical transmembrane segment spans residues 35–55; it reads LFGGLAAMLGLIAFALLLLAC. At 56 to 131 the chain is on the cytoplasmic side; sequence SYWRLSRQTE…GESKVTEENH (76 aa). The VIMAG motif lies at 88 to 92; that stretch reads VIMAG.

Belongs to the GLUTAMINE DUMPER 1 (TC 9.B.60) family. Expressed in the vascular tissues. Also detected in guard cells.

The protein resides in the membrane. Its function is as follows. Probable subunit of an amino acid transporter involved in the regulation of the amino acid metabolism. Stimulates amino acid export by activating nonselective amino acid facilitators. The chain is Protein GLUTAMINE DUMPER 5 (GDU5) from Arabidopsis thaliana (Mouse-ear cress).